Consider the following 605-residue polypeptide: Protein MLN51 homolog (605 aa).

2 stretches are compositionally biased toward acidic residues: residues 1–16 (MAPDGVEDSDYESDPD) and 30–40 (SDDDEDDEEAD). Disordered stretches follow at residues 1 to 88 (MAPD…DGDY), 101 to 132 (NNDKTIVAGNGTDDSAATDLVDGEEQKKKEPF), 151 to 275 (DAAS…GRPP), 350 to 380 (TAQTTSHGRGVPPHGQVLYQQSPNQGDKVSS), and 544 to 605 (YQAD…SFSK). Residue S30 is modified to Phosphoserine. Basic and acidic residues predominate over residues 41–57 (DHDKLRAAIQIHSDEHS). A compositionally biased stretch (acidic residues) spans 75–87 (SYGDDDDEEEDGD). Residues 166-192 (QSRDERKWGHDKFEEMNTQKQQYDRRT) show a composition bias toward basic and acidic residues. Polar residues-rich tracts occupy residues 214–228 (NNSKEFTGNGHQNQF), 247–265 (NGNQAPSVQTKQSQNSSVE), and 367–380 (LYQQSPNQGDKVSS). Residues 552–567 (PSSAGSSSQENSSNNP) are compositionally biased toward low complexity. Positions 578–593 (VTNNGNSQRSNSNPNK) are enriched in polar residues.

This sequence belongs to the CASC3 family. In terms of assembly, weakly interacts with EIF4A3.

It is found in the nucleus. The protein localises to the cytoplasm. Core component of the splicing-dependent multiprotein exon junction complex (EJC) deposited at splice junctions on mRNAs. The EJC is a dynamic structure consisting of core proteins and several peripheral nuclear and cytoplasmic associated factors that join the complex only transiently either during EJC assembly or during subsequent mRNA metabolism. The EJC marks the position of the exon-exon junction in the mature mRNA for the gene expression machinery and the core components remain bound to spliced mRNAs throughout all stages of mRNA metabolism thereby influencing downstream processes including nuclear mRNA export, subcellular mRNA localization, translation efficiency and nonsense-mediated mRNA decay (NMD). Stimulates the ATPase and RNA-helicase activities of EIF4A3. The polypeptide is Protein MLN51 homolog (Arabidopsis thaliana (Mouse-ear cress)).